The primary structure comprises 156 residues: Small ribosomal subunit protein uS7 (156 aa).

Belongs to the universal ribosomal protein uS7 family. As to quaternary structure, part of the 30S ribosomal subunit. Contacts proteins S9 and S11.

Its function is as follows. One of the primary rRNA binding proteins, it binds directly to 16S rRNA where it nucleates assembly of the head domain of the 30S subunit. Is located at the subunit interface close to the decoding center, probably blocks exit of the E-site tRNA. This Staphylococcus aureus (strain bovine RF122 / ET3-1) protein is Small ribosomal subunit protein uS7.